The primary structure comprises 258 residues: Synaptosomal-associated protein 29 (258 aa).

Residues 1-43 are disordered; sequence MSAYPRSYNPFDEDAEDEDARPAPWSDSRDLADGPGAPADRQQ. Phosphoserine is present on residues Ser-65, Ser-77, and Ser-114. Residues 76–107 are a coiled coil; that stretch reads VSAEELVRQRGALERTEKMVDKMEQDLKTSQK. 2 disordered regions span residues 127–147 and 161–188; these read PAET…GRLK and QASH…SSEA. Residues Thr-130 and Thr-137 each carry the phosphothreonine modification. Residues 131–142 show a composition bias toward polar residues; it reads PSAQNGTLTPQP. Ser-163, Ser-182, Ser-185, Ser-204, and Ser-210 each carry phosphoserine. One can recognise a t-SNARE coiled-coil homology domain in the interval 196–258; the sequence is RACHQRIDSN…TSTERKVRQL (63 aa).

Belongs to the SNAP-25 family. As to quaternary structure, forms a SNARE complex, composed of VAMP8, SNAP29 and STX17, involved in fusion of autophagosome with lysosome. Interacts with multiple syntaxins including STX6. Interacts with EIPR1. Interacts with STX17; this interaction is increased in the absence of TMEM39A.

Its subcellular location is the cytoplasm. The protein resides in the golgi apparatus membrane. The protein localises to the cytoplasmic vesicle. It is found in the autophagosome membrane. It localises to the cell projection. Its subcellular location is the cilium membrane. Its function is as follows. SNAREs, soluble N-ethylmaleimide-sensitive factor-attachment protein receptors, are essential proteins for fusion of cellular membranes. SNAREs localized on opposing membranes assemble to form a trans-SNARE complex, an extended, parallel four alpha-helical bundle that drives membrane fusion. SNAP29 is a SNARE involved in autophagy through the direct control of autophagosome membrane fusion with the lysososome membrane. Also plays a role in ciliogenesis by regulating membrane fusions. The sequence is that of Synaptosomal-associated protein 29 from Bos taurus (Bovine).